Consider the following 126-residue polypeptide: Translation initiation factor 5A (126 aa).

Position 36 is a hypusine (lysine 36).

This sequence belongs to the eIF-5A family.

The protein localises to the cytoplasm. Functions by promoting the formation of the first peptide bond. The polypeptide is Translation initiation factor 5A (Haloarcula marismortui (strain ATCC 43049 / DSM 3752 / JCM 8966 / VKM B-1809) (Halobacterium marismortui)).